The sequence spans 133 residues: Antifungal protein ginkbilobin-like protein 2 (133 aa).

A signal peptide spans Met1–Gly24. In terms of domain architecture, Gnk2-homologous spans Thr28–Ile133. Residue Asn36 coordinates alpha-D-mannopyranose. Cystine bridges form between Cys87/Cys96 and Cys99/Cys124. Arg118 and Glu129 together coordinate alpha-D-mannopyranose.

Exerts antifungal activity through its carbohydrate-binding specificity. The protein is Antifungal protein ginkbilobin-like protein 2 of Picea glauca (White spruce).